An 84-amino-acid polypeptide reads, in one-letter code: MGGISIWQLLIIAVIVILLFGTKKLRGMGGDLGSAVKGFKKAMSDEDKPADKKDADFEPKNIEQQKTEASAETTAETKKDKEQA.

The chain crosses the membrane as a helical span at residues 1 to 21 (MGGISIWQLLIIAVIVILLFG). The segment at 40–84 (KKAMSDEDKPADKKDADFEPKNIEQQKTEASAETTAETKKDKEQA) is disordered. Basic and acidic residues-rich tracts occupy residues 42–66 (AMSDEDKPADKKDADFEPKNIEQQK) and 75–84 (AETKKDKEQA).

It belongs to the TatA/E family. As to quaternary structure, the Tat system comprises two distinct complexes: a TatABC complex, containing multiple copies of TatA, TatB and TatC subunits, and a separate TatA complex, containing only TatA subunits. Substrates initially bind to the TatABC complex, which probably triggers association of the separate TatA complex to form the active translocon.

It localises to the cell inner membrane. Its function is as follows. Part of the twin-arginine translocation (Tat) system that transports large folded proteins containing a characteristic twin-arginine motif in their signal peptide across membranes. TatA could form the protein-conducting channel of the Tat system. This Vibrio atlanticus (strain LGP32) (Vibrio splendidus (strain Mel32)) protein is Sec-independent protein translocase protein TatA.